We begin with the raw amino-acid sequence, 136 residues long: MAKAIPITGSRRNVHVGSRKSSFRIQKGVIHVQTSFNNTIVAVTDIKGRVVSWSSAGTCGFKGTRRGTSFAAQIAATNAIRIVQGMQRAEVMIKGPGIGRDAVLRAIRGSGVLLTFVRDVTPMPHNGCRPPKKRRV.

It belongs to the universal ribosomal protein uS11 family. As to quaternary structure, part of the 30S ribosomal subunit.

The protein localises to the plastid. The polypeptide is Small ribosomal subunit protein uS11c (Epifagus virginiana (Beechdrops)).